The chain runs to 82 residues: Small ribosomal subunit protein bS18 (82 aa).

It belongs to the bacterial ribosomal protein bS18 family. Part of the 30S ribosomal subunit. Forms a tight heterodimer with protein bS6.

Functionally, binds as a heterodimer with protein bS6 to the central domain of the 16S rRNA, where it helps stabilize the platform of the 30S subunit. The sequence is that of Small ribosomal subunit protein bS18 from Chlamydia felis (strain Fe/C-56) (Chlamydophila felis).